A 313-amino-acid chain; its full sequence is Pseudouridine kinase (313 aa).

Belongs to the carbohydrate kinase PfkB family.

It carries out the reaction pseudouridine + ATP = psi-UMP + ADP + H(+). Its function is as follows. Catalyzes the phosphorylation of pseudouridine to pseudouridine 5'-phosphate (PsiMP). The chain is Pseudouridine kinase (psuK) from Escherichia coli (strain K12).